A 269-amino-acid chain; its full sequence is Putative phosphoenolpyruvate synthase regulatory protein (269 aa).

149–156 (GVSRSGKT) lines the ADP pocket.

This sequence belongs to the pyruvate, phosphate/water dikinase regulatory protein family. PSRP subfamily.

The catalysed reaction is [pyruvate, water dikinase] + ADP = [pyruvate, water dikinase]-phosphate + AMP + H(+). The enzyme catalyses [pyruvate, water dikinase]-phosphate + phosphate + H(+) = [pyruvate, water dikinase] + diphosphate. In terms of biological role, bifunctional serine/threonine kinase and phosphorylase involved in the regulation of the phosphoenolpyruvate synthase (PEPS) by catalyzing its phosphorylation/dephosphorylation. The chain is Putative phosphoenolpyruvate synthase regulatory protein from Pseudoalteromonas translucida (strain TAC 125).